The sequence spans 115 residues: Photosystem II reaction center Psb28 protein (115 aa).

It belongs to the Psb28 family. As to quaternary structure, part of the photosystem II complex.

The protein resides in the plastid. It localises to the chloroplast thylakoid membrane. The protein is Photosystem II reaction center Psb28 protein of Trieres chinensis (Marine centric diatom).